Consider the following 144-residue polypeptide: Large ribosomal subunit protein uL15 (144 aa).

The tract at residues 1–51 (MKLNELKPATGSRSKRLRKGRGLSSGHGFTSGRGTKGQKAHGKTRLGFEGG) is disordered. A compositionally biased stretch (gly residues) spans 23-35 (LSSGHGFTSGRGT).

This sequence belongs to the universal ribosomal protein uL15 family. Part of the 50S ribosomal subunit.

Its function is as follows. Binds to the 23S rRNA. The chain is Large ribosomal subunit protein uL15 from Limosilactobacillus reuteri (strain DSM 20016) (Lactobacillus reuteri).